A 269-amino-acid chain; its full sequence is Small ribosomal subunit protein eS1 (269 aa).

A disordered region spans residues 1–20 (MAVGKNKGVSKGGKKGSKKK).

It belongs to the eukaryotic ribosomal protein eS1 family. As to quaternary structure, component of the small ribosomal subunit. Mature ribosomes consist of a small (40S) and a large (60S) subunit. The 40S subunit contains about 33 different proteins and 1 molecule of RNA (18S). The 60S subunit contains about 49 different proteins and 3 molecules of RNA (28S, 5.8S and 5S).

It localises to the cytoplasm. Functionally, has an essential role in oogenesis. This Anopheles gambiae (African malaria mosquito) protein is Small ribosomal subunit protein eS1.